We begin with the raw amino-acid sequence, 107 residues long: Nucleoid-associated protein A1C_06705 (107 aa).

It belongs to the YbaB/EbfC family. As to quaternary structure, homodimer.

It localises to the cytoplasm. It is found in the nucleoid. In terms of biological role, binds to DNA and alters its conformation. May be involved in regulation of gene expression, nucleoid organization and DNA protection. In Rickettsia akari (strain Hartford), this protein is Nucleoid-associated protein A1C_06705.